The following is a 582-amino-acid chain: Guanine nucleotide-binding protein-like NSN1 (582 aa).

Residues 1–46 (MVKRSKKSKSKRVTLKQKHKVLKKVKEHHKKKAKDAKKLGLHRKPR) are compositionally biased toward basic residues. Residues 1–58 (MVKRSKKSKSKRVTLKQKHKVLKKVKEHHKKKAKDAKKLGLHRKPRVEKDPGIPNDWP) form a disordered region. The interval 2–49 (VKRSKKSKSKRVTLKQKHKVLKKVKEHHKKKAKDAKKLGLHRKPRVEK) is basic. Short sequence motifs (nuclear localization signal) lie at residues 5-12 (SKKSKSKR), 22-29 (LKKVKEHH), and 69-76 (VRRARALE). Residues 15 to 94 (LKQKHKVLKK…RKERAKKRKL (80 aa)) adopt a coiled-coil conformation. The CP-type G domain occupies 127 to 311 (YKELVKVIEL…LLDCPGVVML (185 aa)). The DARXP motif signature appears at 145–149 (DARDP). Residues 175 to 178 (NKID) are G4. 175 to 178 (NKID) serves as a coordination point for GTP. Residues 202-204 (KCS) form a G5 region. Residues 260-267 (GLPNVGKS) form a G1 region. 263 to 268 (NVGKSS) serves as a coordination point for GTP. Residues 281 to 456 (VGATPGLTRS…NEFNPVIIPS (176 aa)) form an intermediate region. Positions 286–290 (GLTRS) are G2. Residues 304 to 307 (DCPG) and glycine 307 contribute to the GTP site. Residues 304–307 (DCPG) form a G3 region. Positions 463 to 551 (DETMIEDESK…EEDLMDGDYD (89 aa)) are acidic. The tract at residues 469-545 (DESKTQTEEE…KKAGADEEDL (77 aa)) is disordered. The span at 476-496 (EEEAEHESDDDESMGGEEEEE) shows a compositional bias: acidic residues. Basic and acidic residues predominate over residues 497–506 (AGKTKEKSET). Positions 515–537 (AAESMLNTKKQKAEKKKRKKAKK) form a coiled coil. Positions 522-529 (TKKQKAEK) match the Nuclear localization signal 4 motif. Basic residues predominate over residues 523 to 537 (KKQKAEKKKRKKAKK).

This sequence belongs to the TRAFAC class YlqF/YawG GTPase family. In terms of assembly, interacts with EBP2 and PES. As to expression, mostly expressed in flowers, siliques and inflorescence apex, and, to a lower extent, in stems and leaves.

The protein localises to the nucleus. Its subcellular location is the nucleolus. Its function is as follows. Involved in the differentiation of epidermal cells, probably via the regulation of the expression of meristem-related genes (e.g. CLV3, STM, KNAT1, CUC2 and AG) and of leaf polarity-related genes (e.g. YAB5, FIL, AS2, PHB and PHV). May play a role in regulating cellular proliferation. Necessary for flower development, probably by preventing apical dominance through the down-regulation of AG expression. Required for embryogenesis, leaf and cotyledon development, as well as for leaf polarity establishment. Plays an important role in plant growth and senescence by modulating ribosome biogenesis in nucleolus. Possesses GTPAse activity in vitro. Possesses RNA binding activity in vitro. Associates with ribosomes. This chain is Guanine nucleotide-binding protein-like NSN1, found in Arabidopsis thaliana (Mouse-ear cress).